The chain runs to 103 residues: Large ribosomal subunit protein bL21 (103 aa).

The protein belongs to the bacterial ribosomal protein bL21 family. Part of the 50S ribosomal subunit. Contacts protein L20.

Its function is as follows. This protein binds to 23S rRNA in the presence of protein L20. The polypeptide is Large ribosomal subunit protein bL21 (Pseudomonas fluorescens (strain Pf0-1)).